The following is a 103-amino-acid chain: Cell division protein CrgA (103 aa).

2 consecutive transmembrane segments (helical) span residues 49 to 69 (FVPL…VYYL) and 80 to 100 (IGAW…LMTM).

It belongs to the CrgA family.

The protein localises to the cell membrane. Functionally, involved in cell division. In Bifidobacterium longum (strain NCC 2705), this protein is Cell division protein CrgA.